A 647-amino-acid polypeptide reads, in one-letter code: MDKINITFPDGNSTEFDKGITTEEIAQSISPGLRKKAVAGKFNDKMVDLTRPLEEDGSIEIVTPGSDEALEVLRHSTAHLMAQALKRLYGDVKFGVGPVIDGGFYYDFDTDVKISSDDFPEIEKTMKQIVNENYKIERKVVSREEAKEFFKDDPYKLELIDAIPEDESVTLYSQGEFTDLCRGVHVPSTSKIKEFKLLSTAGAYWRGDSNNKMLQRIYGTAFFDKKDLKAHLKMLEERKERDHRKIGKELDLFMNSQLVGAGLPLWLPNGATIRREIERYIVDKEVALGYDHVYTPVMANVELYKTSGHWDHYQDDMFPPMKLDETEEMVLRPMNCPHHMMIYKNKPHSYRELPIRIAELGTMHRYEASGAVSGLQRVRGMTLNDSHIFVRPDQIKEEFKRVVELILDVYEDFGFENYSFRLSYRDPEDKEKYFDDDEMWERAESMLKEAVDEMGLPYEEAIGEAAFYGPKLDVQVKTAMGKEETLSTAQLDFLLPERFDLAYIGKDGEEHRPVVIHRGVVSTMERFVAFLTEETKGAFPTWLAPKQVEIIPVNVDLHYDYARQIQDELKSQGVRVEIDDRNEKMGYKIREAQMHKIPYQLVIGDKEIENNEVNVRKYGSKDQETVEKDEFIWNLVDEIRLKKQRQN.

In terms of domain architecture, TGS spans 1-63 (MDKINITFPD…EEDGSIEIVT (63 aa)). Residues 242 to 540 (DHRKIGKELD…LTEETKGAFP (299 aa)) are catalytic. Residues C336, H387, and H517 each coordinate Zn(2+).

It belongs to the class-II aminoacyl-tRNA synthetase family. Homodimer. The cofactor is Zn(2+).

It is found in the cytoplasm. It carries out the reaction tRNA(Thr) + L-threonine + ATP = L-threonyl-tRNA(Thr) + AMP + diphosphate + H(+). Its function is as follows. Catalyzes the attachment of threonine to tRNA(Thr) in a two-step reaction: L-threonine is first activated by ATP to form Thr-AMP and then transferred to the acceptor end of tRNA(Thr). Also edits incorrectly charged L-seryl-tRNA(Thr). The chain is Threonine--tRNA ligase from Staphylococcus carnosus (strain TM300).